Reading from the N-terminus, the 314-residue chain is Trihelix transcription factor ASR3 (314 aa).

The segment at Met1–Ala34 is disordered. In terms of domain architecture, Myb-like spans Arg38–Ala104. The Nuclear localization signal motif lies at Cys84–Arg91. The short motif at Leu161–Leu165 is the EAR 1 element. Residue Thr189 is modified to Phosphothreonine; by MAPK4. The disordered stretch occupies residues Cys207–Lys255. Positions Leu280–Leu284 match the EAR 2 motif.

In terms of assembly, homodimer. Interacts directly with MPK4. Post-translationally, phosphorylated on Thr-189 by MPK4 in response to microbe-associated molecular patterns (MAMPs, e.g. flg22, elf18, chitin, and LPS). This phosphorylation enhances DNA-binding and thus negatively regulates immune gene expression.

The protein resides in the nucleus. Transcriptional repressor that binds DNA and plays a negative role in regulating microbe-associated molecular patterns-(MAMPs, e.g. flg22, elf18, chitin, and LPS) triggered immunity (PTI) by negatively regulating immune gene expression. The polypeptide is Trihelix transcription factor ASR3 (Arabidopsis thaliana (Mouse-ear cress)).